A 266-amino-acid chain; its full sequence is 3-deoxy-manno-octulosonate cytidylyltransferase 1 (266 aa).

This sequence belongs to the KdsB family.

It localises to the cytoplasm. The catalysed reaction is 3-deoxy-alpha-D-manno-oct-2-ulosonate + CTP = CMP-3-deoxy-beta-D-manno-octulosonate + diphosphate. It functions in the pathway nucleotide-sugar biosynthesis; CMP-3-deoxy-D-manno-octulosonate biosynthesis; CMP-3-deoxy-D-manno-octulosonate from 3-deoxy-D-manno-octulosonate and CTP: step 1/1. The protein operates within bacterial outer membrane biogenesis; lipopolysaccharide biosynthesis. In terms of biological role, activates KDO (a required 8-carbon sugar) for incorporation into bacterial lipopolysaccharide in Gram-negative bacteria. This chain is 3-deoxy-manno-octulosonate cytidylyltransferase 1, found in Paraburkholderia phytofirmans (strain DSM 17436 / LMG 22146 / PsJN) (Burkholderia phytofirmans).